The chain runs to 160 residues: SsrA-binding protein (160 aa).

The segment at 131-160 (KKEFDKRHTEKERDSDREIQRAMRTKGKDD) is disordered.

This sequence belongs to the SmpB family.

The protein resides in the cytoplasm. Its function is as follows. Required for rescue of stalled ribosomes mediated by trans-translation. Binds to transfer-messenger RNA (tmRNA), required for stable association of tmRNA with ribosomes. tmRNA and SmpB together mimic tRNA shape, replacing the anticodon stem-loop with SmpB. tmRNA is encoded by the ssrA gene; the 2 termini fold to resemble tRNA(Ala) and it encodes a 'tag peptide', a short internal open reading frame. During trans-translation Ala-aminoacylated tmRNA acts like a tRNA, entering the A-site of stalled ribosomes, displacing the stalled mRNA. The ribosome then switches to translate the ORF on the tmRNA; the nascent peptide is terminated with the 'tag peptide' encoded by the tmRNA and targeted for degradation. The ribosome is freed to recommence translation, which seems to be the essential function of trans-translation. This Stutzerimonas stutzeri (strain A1501) (Pseudomonas stutzeri) protein is SsrA-binding protein.